A 224-amino-acid chain; its full sequence is Dehydration-responsive element-binding protein 1G (224 aa).

Polar residues predominate over residues 1–16; sequence MDVSAALSSDYSSGTP. Residues 1–46 are disordered; sequence MDVSAALSSDYSSGTPSPVAADADDGSSAYMTVSSAPPKRRAGRTK. The AP2/ERF DNA-binding region spans 54-111; that stretch reads VFKGVRRRNPGRWVCEVREPHGKQRIWLGTFETAEMAARAHDVAALALRGRAACLNFA.

This sequence belongs to the AP2/ERF transcription factor family. ERF subfamily.

The protein localises to the nucleus. Functionally, transcriptional activator that binds specifically to the DNA sequence 5'-[AG]CCGAC-3'. Binding to the C-repeat/DRE element mediates high salinity- and dehydration-inducible transcription. The protein is Dehydration-responsive element-binding protein 1G (DREB1G) of Oryza sativa subsp. indica (Rice).